Here is a 149-residue protein sequence, read N- to C-terminus: Transcriptional repressor NrdR (149 aa).

A zinc finger lies at 3-34 (CPFCNADDTKVIDSRLVADGHQVRRRRECLVC). The 91-residue stretch at 49-139 (PRVIKSNGVR…VYRSFEDIRE (91 aa)) folds into the ATP-cone domain.

The protein belongs to the NrdR family. Requires Zn(2+) as cofactor.

Negatively regulates transcription of bacterial ribonucleotide reductase nrd genes and operons by binding to NrdR-boxes. This Tolumonas auensis (strain DSM 9187 / NBRC 110442 / TA 4) protein is Transcriptional repressor NrdR.